Reading from the N-terminus, the 469-residue chain is Properdin (469 aa).

The first 27 residues, 1 to 27 (MITEGAQAPRLLLPPLLLLLTLPATGS), serve as a signal peptide directing secretion. TSP type-1 domains are found at residues 28–76 (DPVL…QPCR), 77–134 (SPRW…QCCP), 136–191 (MGGW…QVCP), 193–255 (HGAW…PPCP), 257–313 (AGGW…VPCP), 315–377 (DGEW…QHCP), and 379–462 (KGSW…PACK). 3 disulfide bridges follow: Cys-32–Cys-56, Cys-43–Cys-72, and Cys-57–Cys-75. C-linked (Man) tryptophan glycans are attached at residues Trp-83 and Trp-86. Cystine bridges form between Cys-89–Cys-127, Cys-93–Cys-133, Cys-104–Cys-111, Cys-132–Cys-170, Cys-148–Cys-184, Cys-152–Cys-190, and Cys-163–Cys-174. Thr-92 carries O-linked (Fuc...) threonine glycosylation. Trp-139, Trp-142, and Trp-145 each carry a C-linked (Man) tryptophan glycan. Thr-151 carries an O-linked (Fuc...) threonine glycan. C-linked (Man) tryptophan glycosylation is found at Trp-196, Trp-199, and Trp-202. 3 disulfides stabilise this stretch: Cys-205–Cys-248, Cys-209–Cys-254, and Cys-224–Cys-238. Ser-208 carries an O-linked (Fuc...) serine glycan. The disordered stretch occupies residues 219–238 (TRSRKCSAPEPSQKPPGKPC). 2 C-linked (Man) tryptophan glycosylation sites follow: Trp-260 and Trp-263. Cystine bridges form between Cys-269–Cys-306, Cys-273–Cys-312, and Cys-284–Cys-296. A glycan (O-linked (Fuc...) threonine) is linked at Thr-272. C-linked (Man) tryptophan glycans are attached at residues Trp-321 and Trp-324. 3 cysteine pairs are disulfide-bonded: Cys-327–Cys-370, Cys-337–Cys-376, and Cys-350–Cys-360. The interval 351–359 (RGRKFDGHR) is interaction with Complement C3 beta chain. C-linked (Man) tryptophan glycosylation is found at Trp-382, Trp-385, and Trp-388. 3 cysteine pairs are disulfide-bonded: Cys-391/Cys-455, Cys-395/Cys-461, and Cys-407/Cys-439. Asn-428 carries N-linked (GlcNAc...) (complex) asparagine glycosylation.

As to quaternary structure, in plasma, properdin exists as dimers, trimers or tetramers in the relative proportions of 26:54:20. Interacts with the pro-C3-convertase enzyme complex (C3b-Bb) comprised of Complement C3 beta chain (C3b) and the Complement factor B Bb fragment (Bb), where it binds (via its TSP type-1 5 domain) with C3b and Bb. This interaction stabilizes the complex and allows it to become the active C3-convertase enzyme complex (C3b-Bb-FP). Interacts with C3b. Interacts with CFB.

Its subcellular location is the secreted. A positive regulator of the alternate pathway (AP) of complement. It binds to and stabilizes the C3- and C5-convertase enzyme complexes. Inhibits CFI-CFH mediated degradation of Complement C3 beta chain (C3b). This is Properdin from Homo sapiens (Human).